Here is a 315-residue protein sequence, read N- to C-terminus: Thioredoxin reductase (315 aa).

45–52 (EGNTPGGK) serves as a coordination point for FAD. C145 and C148 are disulfide-bonded. 288-297 (DCRSKSFRQI) contacts FAD.

This sequence belongs to the class-II pyridine nucleotide-disulfide oxidoreductase family. In terms of assembly, homodimer. FAD serves as cofactor.

The protein resides in the cytoplasm. It catalyses the reaction [thioredoxin]-dithiol + NADP(+) = [thioredoxin]-disulfide + NADPH + H(+). In Mycoplasma genitalium (strain ATCC 33530 / DSM 19775 / NCTC 10195 / G37) (Mycoplasmoides genitalium), this protein is Thioredoxin reductase (trxB).